Here is a 106-residue protein sequence, read N- to C-terminus: UPF0145 protein CLL_A2504 (106 aa).

It belongs to the UPF0145 family.

This chain is UPF0145 protein CLL_A2504, found in Clostridium botulinum (strain Eklund 17B / Type B).